We begin with the raw amino-acid sequence, 230 residues long: A-type ATP synthase subunit D (230 aa).

Residues 204-230 (AKKEEEEDALAAEEEAEEEPEAVTADD) are disordered. Positions 208-230 (EEEDALAAEEEAEEEPEAVTADD) are enriched in acidic residues.

The protein belongs to the V-ATPase D subunit family. In terms of assembly, has multiple subunits with at least A(3), B(3), C, D, E, F, H, I and proteolipid K(x).

It is found in the cell membrane. Component of the A-type ATP synthase that produces ATP from ADP in the presence of a proton gradient across the membrane. This chain is A-type ATP synthase subunit D, found in Haloarcula marismortui (strain ATCC 43049 / DSM 3752 / JCM 8966 / VKM B-1809) (Halobacterium marismortui).